The chain runs to 946 residues: Ent-kaur-16-ene synthase (946 aa).

Mg(2+) contacts are provided by Asp656, Glu660, Asn839, Asp840, Ser843, and Asp847. Positions 656 to 660 (DEFFE) match the DEXXE motif motif.

It belongs to the terpene synthase family. It depends on Mg(2+) as a cofactor.

The catalysed reaction is ent-copalyl diphosphate = ent-kaur-16-ene + diphosphate. It catalyses the reaction (2E,6E,10E)-geranylgeranyl diphosphate = ent-copalyl diphosphate. It participates in plant hormone biosynthesis; gibberellin biosynthesis. In terms of biological role, catalyzes the conversion of geranylgeranyl diphosphate to the gibberellin precursor ent-kaurene diphosphate in a two step process. This is Ent-kaur-16-ene synthase from Phaeosphaeria sp. (strain L487).